We begin with the raw amino-acid sequence, 286 residues long: Protease HtpX (286 aa).

The next 2 helical transmembrane spans lie at 4 to 24 and 33 to 53; these read ILLF…ILSL and TGLL…SLFL. Residue histidine 139 participates in Zn(2+) binding. Residue glutamate 140 is part of the active site. Histidine 143 contributes to the Zn(2+) binding site. Helical transmembrane passes span 147–167 and 186–206; these read GDMV…IFVS and IYFL…SMIA. Residue glutamate 214 participates in Zn(2+) binding.

Belongs to the peptidase M48B family. It depends on Zn(2+) as a cofactor.

The protein resides in the cell inner membrane. This Pasteurella multocida (strain Pm70) protein is Protease HtpX.